The sequence spans 308 residues: Ornithine carbamoyltransferase (308 aa).

Carbamoyl phosphate is bound by residues 56–59 (STRT), glutamine 83, arginine 107, and 134–137 (HPCQ). L-ornithine is bound by residues asparagine 165, aspartate 225, and 229 to 230 (SM). Carbamoyl phosphate contacts are provided by residues 266–267 (CL) and arginine 294.

This sequence belongs to the aspartate/ornithine carbamoyltransferase superfamily. OTCase family.

The protein localises to the cytoplasm. The enzyme catalyses carbamoyl phosphate + L-ornithine = L-citrulline + phosphate + H(+). The protein operates within amino-acid biosynthesis; L-arginine biosynthesis; L-arginine from L-ornithine and carbamoyl phosphate: step 1/3. Reversibly catalyzes the transfer of the carbamoyl group from carbamoyl phosphate (CP) to the N(epsilon) atom of ornithine (ORN) to produce L-citrulline. This Cereibacter sphaeroides (strain ATCC 17029 / ATH 2.4.9) (Rhodobacter sphaeroides) protein is Ornithine carbamoyltransferase.